The following is a 279-amino-acid chain: Bis(5'-nucleosyl)-tetraphosphatase, symmetrical (279 aa).

The protein belongs to the Ap4A hydrolase family.

The enzyme catalyses P(1),P(4)-bis(5'-adenosyl) tetraphosphate + H2O = 2 ADP + 2 H(+). Functionally, hydrolyzes diadenosine 5',5'''-P1,P4-tetraphosphate to yield ADP. This chain is Bis(5'-nucleosyl)-tetraphosphatase, symmetrical, found in Edwardsiella ictaluri (strain 93-146).